Consider the following 182-residue polypeptide: ATP-dependent protease subunit HslV (182 aa).

Residue T12 is part of the active site. Residues A167, C170, and T173 each coordinate Na(+).

It belongs to the peptidase T1B family. HslV subfamily. As to quaternary structure, a double ring-shaped homohexamer of HslV is capped on each side by a ring-shaped HslU homohexamer. The assembly of the HslU/HslV complex is dependent on binding of ATP.

It localises to the cytoplasm. The enzyme catalyses ATP-dependent cleavage of peptide bonds with broad specificity.. Its activity is regulated as follows. Allosterically activated by HslU binding. Protease subunit of a proteasome-like degradation complex believed to be a general protein degrading machinery. The polypeptide is ATP-dependent protease subunit HslV (Chlorobium phaeobacteroides (strain BS1)).